Here is a 90-residue protein sequence, read N- to C-terminus: Small ribosomal subunit protein bS20 (90 aa).

The span at 1-11 shows a compositional bias: basic residues; the sequence is MAHHKSAKKRI. The segment at 1-22 is disordered; that stretch reads MAHHKSAKKRIRQTERRTEVNR. Positions 12–22 are enriched in basic and acidic residues; the sequence is RQTERRTEVNR.

It belongs to the bacterial ribosomal protein bS20 family.

Binds directly to 16S ribosomal RNA. This chain is Small ribosomal subunit protein bS20, found in Paramagnetospirillum magneticum (strain ATCC 700264 / AMB-1) (Magnetospirillum magneticum).